The primary structure comprises 372 residues: N-acetylneuraminate-9-phosphate synthase (372 aa).

The region spanning 314 to 372 (SIVAARNLNKGYRLQLADMAIKVSEPSGLTAEDFLDLVGKELADNIGEDEPILGNSIIN) is the AFP-like domain.

The catalysed reaction is aldehydo-N-acetyl-D-mannosamine 6-phosphate + phosphoenolpyruvate + H2O = N-acetylneuraminate 9-phosphate + phosphate. It catalyses the reaction aldehydo-D-mannose 6-phosphate + phosphoenolpyruvate + H2O = 3-deoxy-D-glycero-beta-D-galacto-non-2-ulopyranosonate 9-phosphate + phosphate. Functionally, catalyzes the condensation of phosphoenolpyruvate (PEP) and N-acetylmannosamine 6-phosphate (ManNAc-6-P) or D-mannose 6-phosphate (Man-6-P) to generate the phosphorylated forms of both the sialic acids N-acetylneuraminic acid (Neu5Ac) and deaminoneuraminic acid (KDN), respectively. Essential for biosynthesis of sialic acids in neurons of the central nervous system. This is N-acetylneuraminate-9-phosphate synthase from Drosophila melanogaster (Fruit fly).